A 161-amino-acid polypeptide reads, in one-letter code: Ribosome maturation factor RimP (161 aa).

Belongs to the RimP family.

It is found in the cytoplasm. Required for maturation of 30S ribosomal subunits. The sequence is that of Ribosome maturation factor RimP from Rickettsia massiliae (strain Mtu5).